The sequence spans 512 residues: Maturase K (512 aa).

Belongs to the intron maturase 2 family. MatK subfamily.

Its subcellular location is the plastid. It localises to the chloroplast. Functionally, usually encoded in the trnK tRNA gene intron. Probably assists in splicing its own and other chloroplast group II introns. In Erythranthe guttata (Yellow monkey flower), this protein is Maturase K.